We begin with the raw amino-acid sequence, 330 residues long: Negative regulator of the PHO system (330 aa).

A Protein kinase domain is found at 8-290; that stretch reads FQQLEKLGEG…ARQALQHPWF (283 aa). ATP contacts are provided by residues 14 to 22 and K37; that span reads LGEGTYATV. D131 (proton acceptor) is an active-site residue. Residues 300-330 form a disordered region; that stretch reads MQHLADPYQQSQQQSQQQAQQSQQMDPQTYR. Residues 308 to 323 show a composition bias toward low complexity; the sequence is QQSQQQSQQQAQQSQQ.

It belongs to the protein kinase superfamily. CMGC Ser/Thr protein kinase family. CDC2/CDKX subfamily. Interacts with a number of cyclins.

It catalyses the reaction L-seryl-[protein] + ATP = O-phospho-L-seryl-[protein] + ADP + H(+). It carries out the reaction L-threonyl-[protein] + ATP = O-phospho-L-threonyl-[protein] + ADP + H(+). When phosphate concentrations are high it phosphorylates the PHO4 transcription factor thus establishing repression. The protein is Negative regulator of the PHO system (PHO85) of Debaryomyces hansenii (strain ATCC 36239 / CBS 767 / BCRC 21394 / JCM 1990 / NBRC 0083 / IGC 2968) (Yeast).